The sequence spans 420 residues: MGPLLVWHRGDLRLHDHPALLEALARGPVVGLVVLDPNNLKTTPRRRAWFLENVRALREAYRARGGALWVLEGLPWEKVPEAARRLKAKAVYALTSHTPYGRYRDGRVREALPVPLHLLPAPHLLPPDLPRAYRVYTPFSRLYRGAAPPLPPPEALPKGPEEGEIPREDPGLPLPEPGEEAALAGLRAFLEAKLPRYAEERDRLDGEGGSRLSPYFALGVLSPRLAAWEAERRGGEGARKWVAELLWRDFSYHLLYHFPWMAERPLDPRFQAFPWQEDEALFQAWYEGKTGVPLVDAAMRELHATGFLSNRARMNAAQFAVKHLLLPWKRCEEAFRHLLLDGDRAVNLQGWQWAGGLGVDAAPYFRVFNPVLQGERHDPEGRWLKRWAPEYPSYAPKDPVVDLEEARRRYLRLARDLARG.

One can recognise a Photolyase/cryptochrome alpha/beta domain in the interval 2-124; that stretch reads GPLLVWHRGD…PLHLLPAPHL (123 aa). The disordered stretch occupies residues 147-176; the sequence is APPLPPPEALPKGPEEGEIPREDPGLPLPE. Over residues 159–170 the composition is skewed to basic and acidic residues; it reads GPEEGEIPREDP. FAD is bound at residue Tyr197. Position 201 (Arg201) interacts with DNA. Residues 209-213, Trp241, Arg248, Asn310, and 341-343 each bind FAD; these read GSRLS and DGD. 2 interaction with DNA regions span residues 244–251 and 310–311; these read ELLWRDFS and NR. Gln373 contacts DNA.

The protein belongs to the DNA photolyase class-1 family. In terms of assembly, monomer. FAD is required as a cofactor.

It catalyses the reaction cyclobutadipyrimidine (in DNA) = 2 pyrimidine residues (in DNA).. In terms of biological role, involved in repair of UV radiation-induced DNA damage. Catalyzes the light-dependent monomerization (300-600 nm) of cyclobutyl pyrimidine dimers (in cis-syn configuration), which are formed between adjacent bases on the same DNA strand upon exposure to ultraviolet radiation. This is Deoxyribodipyrimidine photo-lyase (phr) from Thermus thermophilus (strain ATCC 27634 / DSM 579 / HB8).